The chain runs to 1058 residues: Carbamoyl phosphate synthase large chain (1058 aa).

The interval 1–401 (MPKRTDIQKI…SLLKACRSLE (401 aa)) is carboxyphosphate synthetic domain. Residues R129, R169, G175, G176, R208, I210, E215, G241, I242, H243, Q284, and E298 each contribute to the ATP site. Positions 133-327 (KQLMEELEQP…IAKLAAKIAV (195 aa)) constitute an ATP-grasp 1 domain. Mg(2+) contacts are provided by Q284, E298, and N300. Mn(2+)-binding residues include Q284, E298, and N300. The segment at 402–546 (IGVHHNEIPE…YSTYGWENES (145 aa)) is oligomerization domain. A carbamoyl phosphate synthetic domain region spans residues 547–929 (IKSDKESVLV…ALYKAFEASY (383 aa)). One can recognise an ATP-grasp 2 domain in the interval 671-861 (EQALKELDIP…MAQVATKLIL (191 aa)). The ATP site is built by R707, S746, I748, E752, G777, V778, H779, S780, Q820, and E832. Mg(2+) is bound by residues Q820, E832, and N834. Q820, E832, and N834 together coordinate Mn(2+). Residues 930 to 1058 (LHLPTFGNVV…ESRSFVTEAI (129 aa)) form the MGS-like domain. The tract at residues 930–1058 (LHLPTFGNVV…ESRSFVTEAI (129 aa)) is allosteric domain.

This sequence belongs to the CarB family. As to quaternary structure, composed of two chains; the small (or glutamine) chain promotes the hydrolysis of glutamine to ammonia, which is used by the large (or ammonia) chain to synthesize carbamoyl phosphate. Tetramer of heterodimers (alpha,beta)4. Mg(2+) serves as cofactor. Mn(2+) is required as a cofactor.

It carries out the reaction hydrogencarbonate + L-glutamine + 2 ATP + H2O = carbamoyl phosphate + L-glutamate + 2 ADP + phosphate + 2 H(+). It catalyses the reaction hydrogencarbonate + NH4(+) + 2 ATP = carbamoyl phosphate + 2 ADP + phosphate + 2 H(+). It functions in the pathway amino-acid biosynthesis; L-arginine biosynthesis; carbamoyl phosphate from bicarbonate: step 1/1. It participates in pyrimidine metabolism; UMP biosynthesis via de novo pathway; (S)-dihydroorotate from bicarbonate: step 1/3. Large subunit of the glutamine-dependent carbamoyl phosphate synthetase (CPSase). CPSase catalyzes the formation of carbamoyl phosphate from the ammonia moiety of glutamine, carbonate, and phosphate donated by ATP, constituting the first step of 2 biosynthetic pathways, one leading to arginine and/or urea and the other to pyrimidine nucleotides. The large subunit (synthetase) binds the substrates ammonia (free or transferred from glutamine from the small subunit), hydrogencarbonate and ATP and carries out an ATP-coupled ligase reaction, activating hydrogencarbonate by forming carboxy phosphate which reacts with ammonia to form carbamoyl phosphate. In Streptococcus pneumoniae (strain ATCC 700669 / Spain 23F-1), this protein is Carbamoyl phosphate synthase large chain.